The primary structure comprises 157 residues: Ubiquitin-like protein 4A (157 aa).

One can recognise a Ubiquitin-like domain in the interval 1–76 (MQLTVKALQG…LNLVVKPLEK (76 aa)). Lys48 participates in a covalent cross-link: Glycyl lysine isopeptide (Lys-Gly) (interchain with G-Cter in ubiquitin). Ser90 is modified (phosphoserine). The required and sufficient for interaction with BAG6 stretch occupies residues 96 to 138 (WQLISKVLARHFSIGDASRVLEQLQRDYDRSLSRLTLDDIERL).

Component of the BAG6/BAT3 complex, at least composed of BAG6, UBL4A and GET4/TRC35. Interacts with BAG6; the interaction is direct and required for UBL4A protein stability. Interacts with USP13; may be indirect via BAG6. Post-translationally, polyubiquitinated. Ubiquitination by AMFR and deubiquitination by USP13 may regulate the interaction between the BAG6/BAT complex and SGTA and therefore may regulate client proteins fate.

The protein localises to the cytoplasm. It localises to the cytosol. It is found in the nucleus. In terms of biological role, as part of a cytosolic protein quality control complex, the BAG6/BAT3 complex, maintains misfolded and hydrophobic patches-containing proteins in a soluble state and participates in their proper delivery to the endoplasmic reticulum or alternatively can promote their sorting to the proteasome where they undergo degradation. The BAG6/BAT3 complex is involved in the post-translational delivery of tail-anchored/type II transmembrane proteins to the endoplasmic reticulum membrane. Recruited to ribosomes, it interacts with the transmembrane region of newly synthesized tail-anchored proteins and together with SGTA and ASNA1 mediates their delivery to the endoplasmic reticulum. Client proteins that cannot be properly delivered to the endoplasmic reticulum are ubiquitinated and sorted to the proteasome. Similarly, the BAG6/BAT3 complex also functions as a sorting platform for proteins of the secretory pathway that are mislocalized to the cytosol either delivering them to the proteasome for degradation or to the endoplasmic reticulum. The BAG6/BAT3 complex also plays a role in the endoplasmic reticulum-associated degradation (ERAD), a quality control mechanism that eliminates unwanted proteins of the endoplasmic reticulum through their retrotranslocation to the cytosol and their targeting to the proteasome. It maintains these retrotranslocated proteins in an unfolded yet soluble state condition in the cytosol to ensure their proper delivery to the proteasome. The sequence is that of Ubiquitin-like protein 4A (Ubl4a) from Rattus norvegicus (Rat).